We begin with the raw amino-acid sequence, 299 residues long: Putative KilA-N domain-containing protein R879 (299 aa).

Residues 1–75 enclose the KilA-N domain; that stretch reads MKSDNGILMS…IKVSEIVLSY (75 aa). The stretch at 76-150 forms a coiled coil; sequence HAKEAIKEKE…DKKINELLSK (75 aa).

This Acanthamoeba polyphaga mimivirus (APMV) protein is Putative KilA-N domain-containing protein R879.